The following is a 416-amino-acid chain: UDP-N-acetylglucosamine 1-carboxyvinyltransferase (416 aa).

Position 22–23 (22–23) interacts with phosphoenolpyruvate; sequence KN. Arg-92 contributes to the UDP-N-acetyl-alpha-D-glucosamine binding site. The Proton donor role is filled by Cys-116. Cys-116 carries the post-translational modification 2-(S-cysteinyl)pyruvic acid O-phosphothioketal. Residues 121–125, Asp-304, and Ile-326 each bind UDP-N-acetyl-alpha-D-glucosamine; that span reads RPVDQ.

Belongs to the EPSP synthase family. MurA subfamily.

The protein localises to the cytoplasm. The catalysed reaction is phosphoenolpyruvate + UDP-N-acetyl-alpha-D-glucosamine = UDP-N-acetyl-3-O-(1-carboxyvinyl)-alpha-D-glucosamine + phosphate. Its pathway is cell wall biogenesis; peptidoglycan biosynthesis. In terms of biological role, cell wall formation. Adds enolpyruvyl to UDP-N-acetylglucosamine. This Cupriavidus pinatubonensis (strain JMP 134 / LMG 1197) (Cupriavidus necator (strain JMP 134)) protein is UDP-N-acetylglucosamine 1-carboxyvinyltransferase.